Here is a 213-residue protein sequence, read N- to C-terminus: FMN-dependent NADH:quinone oxidoreductase 3 (213 aa).

FMN contacts are provided by residues serine 10, 16 to 18, and 96 to 99; these read SVS and MYNF.

It belongs to the azoreductase type 1 family. In terms of assembly, homodimer. It depends on FMN as a cofactor.

It carries out the reaction 2 a quinone + NADH + H(+) = 2 a 1,4-benzosemiquinone + NAD(+). The catalysed reaction is N,N-dimethyl-1,4-phenylenediamine + anthranilate + 2 NAD(+) = 2-(4-dimethylaminophenyl)diazenylbenzoate + 2 NADH + 2 H(+). In terms of biological role, quinone reductase that provides resistance to thiol-specific stress caused by electrophilic quinones. Shows a preference for naphthoquinones such as plumbagin. Functionally, also exhibits azoreductase activity. Catalyzes the reductive cleavage of the azo bond in aromatic azo compounds to the corresponding amines. Preferred substrates are methyl red, amaranth and p-aminoazobenzene sulfonamide (PAABSA). The polypeptide is FMN-dependent NADH:quinone oxidoreductase 3 (Pseudomonas aeruginosa (strain ATCC 15692 / DSM 22644 / CIP 104116 / JCM 14847 / LMG 12228 / 1C / PRS 101 / PAO1)).